We begin with the raw amino-acid sequence, 110 residues long: MQFKFLTTVALATLAVAVPTDPPPTNQCNAPNNLECCNSVQAPTNSGLIGTLLGLLNISVGDITGLVGLTCNPISLIGGGNSCNAQTVCCQNNYFGGLISIGCTPIIIDV.

An N-terminal signal peptide occupies residues 1–17 (MQFKFLTTVALATLAVA). 4 disulfide bridges follow: Cys-28/Cys-89, Cys-36/Cys-83, Cys-37/Cys-71, and Cys-90/Cys-103. Asn-57 is a glycosylation site (N-linked (GlcNAc...) asparagine).

It belongs to the fungal hydrophobin family. Self-assembles to form functional amyloid fibrils called rodlets. Self-assembly into fibrillar rodlets occurs spontaneously at hydrophobic:hydrophilic interfaces and the rodlets further associate laterally to form amphipathic monolayers.

The protein resides in the secreted. It is found in the cell wall. Functionally, aerial growth, conidiation, and dispersal of filamentous fungi in the environment rely upon a capability of their secreting small amphipathic proteins called hydrophobins (HPBs) with low sequence identity. Class I can self-assemble into an outermost layer of rodlet bundles on aerial cell surfaces, conferring cellular hydrophobicity that supports fungal growth, development and dispersal; whereas Class II form highly ordered films at water-air interfaces through intermolecular interactions but contribute nothing to the rodlet structure. CoH2 is an asexual monokaryon-specific class I hydrophobin that is involved in aerial growth of mycelia. The polypeptide is Class I hydrophobin 2 (Coprinopsis cinerea (Inky cap fungus)).